We begin with the raw amino-acid sequence, 78 residues long: Acyl carrier protein (78 aa).

Residues 2 to 77 form the Carrier domain; it reads SDIAERVKKI…DAIKYIGENM (76 aa). Position 37 is an O-(pantetheine 4'-phosphoryl)serine (Ser37).

This sequence belongs to the acyl carrier protein (ACP) family. In terms of processing, 4'-phosphopantetheine is transferred from CoA to a specific serine of apo-ACP by AcpS. This modification is essential for activity because fatty acids are bound in thioester linkage to the sulfhydryl of the prosthetic group.

It is found in the cytoplasm. The protein operates within lipid metabolism; fatty acid biosynthesis. Functionally, carrier of the growing fatty acid chain in fatty acid biosynthesis. The sequence is that of Acyl carrier protein from Magnetococcus marinus (strain ATCC BAA-1437 / JCM 17883 / MC-1).